A 108-amino-acid chain; its full sequence is Protein YcgL (108 aa).

Residues 12 to 96 (MFCVIYRSSK…PPEDLLKQHL (85 aa)) enclose the YcgL domain.

The protein is Protein YcgL of Escherichia coli O9:H4 (strain HS).